Here is a 306-residue protein sequence, read N- to C-terminus: Large ribosomal subunit protein mL45 (306 aa).

The interval 287–306 (LKPEEEYEEAQGEAQKPQLA) is disordered.

This sequence belongs to the mitochondrion-specific ribosomal protein mL45 family. In terms of assembly, component of the mitochondrial large ribosomal subunit (mt-LSU). Mature mammalian 55S mitochondrial ribosomes consist of a small (28S) and a large (39S) subunit. The 28S small subunit contains a 12S ribosomal RNA (12S mt-rRNA) and 30 different proteins. The 39S large subunit contains a 16S rRNA (16S mt-rRNA), a copy of mitochondrial valine transfer RNA (mt-tRNA(Val)), which plays an integral structural role, and 52 different proteins.

It is found in the mitochondrion. In terms of biological role, component of the mitochondrial large ribosomal subunit (mt-LSU). Within the mitochondrial ribosomes, required to direct the nascent polypeptide toward the tunnel exit and position the exit at a distance from the membrane surface. The sequence is that of Large ribosomal subunit protein mL45 from Homo sapiens (Human).